The following is a 165-amino-acid chain: LIM domain transcription factor LMO4.2 (165 aa).

2 consecutive LIM zinc-binding domains span residues 21–83 and 85–147; these read KRCA…LFGN and GACS…ALIN.

Acts as a positive cofactor of GATA transcription factors to establish the identity of the ventral mesoderm during gastrulation. Down-regulation in the dorsal mesoderm is necessary for the proper formation of this territory since, when present, lmo4 may bind ldb1 and restrict the availability of this cofactor for Spemman organizer transcription factors. At neurula stages, suppresses primary neuron differentiation and modulates gene expression at the Isthmic Organizer of the midbrain-hindbrain boundary. The sequence is that of LIM domain transcription factor LMO4.2 (lmo4.2) from Xenopus tropicalis (Western clawed frog).